A 258-amino-acid chain; its full sequence is Acyl-[acyl-carrier-protein]--UDP-N-acetylglucosamine O-acyltransferase (258 aa).

It belongs to the transferase hexapeptide repeat family. LpxA subfamily. In terms of assembly, homotrimer.

The protein resides in the cytoplasm. The catalysed reaction is a (3R)-hydroxyacyl-[ACP] + UDP-N-acetyl-alpha-D-glucosamine = a UDP-3-O-[(3R)-3-hydroxyacyl]-N-acetyl-alpha-D-glucosamine + holo-[ACP]. The protein operates within glycolipid biosynthesis; lipid IV(A) biosynthesis; lipid IV(A) from (3R)-3-hydroxytetradecanoyl-[acyl-carrier-protein] and UDP-N-acetyl-alpha-D-glucosamine: step 1/6. Involved in the biosynthesis of lipid A, a phosphorylated glycolipid that anchors the lipopolysaccharide to the outer membrane of the cell. The protein is Acyl-[acyl-carrier-protein]--UDP-N-acetylglucosamine O-acyltransferase of Alkalilimnicola ehrlichii (strain ATCC BAA-1101 / DSM 17681 / MLHE-1).